Consider the following 663-residue polypeptide: Spore germination protein GerIA (663 aa).

Over residues 1-13 (MIWNWLRKKKKSN) the composition is skewed to basic residues. Positions 1–175 (MIWNWLRKKK…SGGNSIYDFT (175 aa)) are disordered. A compositionally biased stretch (basic and acidic residues) spans 47 to 56 (KNNEQKDSSQ). Composition is skewed to low complexity over residues 57–72 (DKQQ…QDKQ), 88–101 (PKQG…QQSA), and 122–150 (DKQQ…QDKQ). 5 helical membrane-spanning segments follow: residues 414–434 (IFVD…DFFI), 451–471 (ILRL…VAVL), 491–511 (AQVP…IDLL), 541–561 (AGLT…ASFI), and 578–598 (FLAF…IFLF).

Belongs to the GerABKA family.

The protein localises to the cell membrane. Required for inosine germination. The sequence is that of Spore germination protein GerIA (gerIA) from Bacillus cereus.